Here is a 473-residue protein sequence, read N- to C-terminus: Phosphatidylserine synthase 1 (473 aa).

Position 2 is an N-acetylalanine (alanine 2). Over 2-35 (ASCVGSRTLSKDDVNYKMHFRMINEQQVEDITID) the chain is Cytoplasmic. A helical transmembrane segment spans residues 36 to 56 (FFYRPHTITLLSFTIVSLMYF). Topologically, residues 57-72 (AFTRDDSVPEDNIWRG) are lumenal. Residues 73–93 (ILSVIFFFLIISVLAFPNGPF) traverse the membrane as a helical segment. Residues 94–102 (TRPHPALWR) lie on the Cytoplasmic side of the membrane. Residues 103–123 (MVFGLSVLYFLFLVFLLFLNF) form a helical membrane-spanning segment. Topologically, residues 124-186 (EQVKSLMYWL…AMKALLIRSY (63 aa)) are lumenal. The helical transmembrane segment at 187 to 207 (GLCWTISITWELTELFFMHLL) threads the bilayer. Over 208 to 216 (PNFAECWWD) the chain is Cytoplasmic. The helical transmembrane segment at 217 to 237 (QVILDILLCNGGGIWLGMVVC) threads the bilayer. Residues 238–286 (RFLEMRTYHWASFKDIHTTTGKIKRAVLQFTPASWTYVRWFDPKSSFQR) lie on the Lumenal side of the membrane. A helical membrane pass occupies residues 287 to 307 (VAGIYLFMIIWQLTELNTFFL). The Cytoplasmic segment spans residues 308–319 (KHIFVFQASHPL). Residues 320–342 (SWCRILFIGGITAPTVRQYYAYL) form a helical membrane-spanning segment. At 343-355 (TDTQCKRVGTQCW) the chain is on the lumenal side. A helical membrane pass occupies residues 356–376 (VFGVIGFLEAIVCIKFGQDLF). The Cytoplasmic segment spans residues 377–383 (SKTQILY). Residues 384 to 404 (VVLWLLCVAFTTFLCLYGMVW) traverse the membrane as a helical segment. The Lumenal segment spans residues 405–473 (YAEHYGHREK…SKVTNGVGKK (69 aa)). Phosphoserine is present on residues serine 417, serine 425, and serine 454. Residues 427-473 (DISWPHGKGSKGSEDGPHKHPGNSESHSSRRRNRHSKSKVTNGVGKK) are disordered. Residues 455–464 (SRRRNRHSKS) are compositionally biased toward basic residues.

This sequence belongs to the phosphatidyl serine synthase family.

It localises to the endoplasmic reticulum membrane. It catalyses the reaction a 1,2-diacyl-sn-glycero-3-phosphoethanolamine + L-serine = a 1,2-diacyl-sn-glycero-3-phospho-L-serine + ethanolamine. The catalysed reaction is a 1,2-diacyl-sn-glycero-3-phosphocholine + L-serine = a 1,2-diacyl-sn-glycero-3-phospho-L-serine + choline. Its pathway is phospholipid metabolism; phosphatidylserine biosynthesis. Its function is as follows. Catalyzes a base-exchange reaction in which the polar head group of phosphatidylethanolamine (PE) or phosphatidylcholine (PC) is replaced by L-serine. Catalyzes mainly the conversion of phosphatidylcholine but also converts, in vitro and to a lesser extent, phosphatidylethanolamine. The chain is Phosphatidylserine synthase 1 (PTDSS1) from Bos taurus (Bovine).